The primary structure comprises 94 residues: Bacterial microcompartment shell protein PduA (94 aa).

The region spanning 5-89 (ALGMVETKGL…PHTDVEKILP (85 aa)) is the BMC domain.

It belongs to the bacterial microcompartments protein family. Homohexamer with a central pore of about 5.6 Angstroms in diameter. The hexamers pack against each other in arrays. Interacts with the N-terminus of PduP which targets PduP to the BMC. Modeling suggests PduC, PduD, PduE, PduL and PduP interact with a cleft formed by the C-terminal segments of 2 adjacent PduA subunits (on the BMC luminal side) in the hexamer.

It localises to the bacterial microcompartment. The protein operates within polyol metabolism; 1,2-propanediol degradation. In terms of biological role, one of the major shell proteins of the bacterial microcompartment (BMC) dedicated to 1,2-propanediol (1,2-PD) degradation. At least one of PduA or PduJ is required for BMC assembly; it must be encoded as the first gene in the pdu operon. Not required for structural integrity of BMCs, it is required to mitigate propionaldehyde toxicity. Controls diffusion of 1,2-PD into and propionaldehyde out of the BMC shell; residue 40 is particularly important for pore permeability. Overexpression of this protein leads to aberrant filaments that extend the length of the cell, cross the cleavage furrow and impair division. The filaments form nanotubes with a hollow center. The isolated BMC shell component protein ratio for J:A:B':B:K:T:U is approximately 15:10:7:6:1:1:2. Edge residues (particularly Lys-26) are important for function and assembly of the BMC, and influence array formation by hexamers. Interaction with PduA allows encapsulation of at least PduP in BMCs. Probably also targets PduD to the BMC. PduA is probably the hub for binding multiple enzymes to the interior of the BMC; modeling suggests PduC, PduD, PduE, PduG, PduL and PduP are targeted to PduA. Functionally, the 1,2-PD-specific bacterial microcompartment (BMC) concentrates low levels of 1,2-PD catabolic enzymes, concentrates volatile reaction intermediates thus enhancing pathway flux and keeps the level of toxic, mutagenic propionaldehyde low. In Salmonella typhimurium (strain LT2 / SGSC1412 / ATCC 700720), this protein is Bacterial microcompartment shell protein PduA.